Reading from the N-terminus, the 101-residue chain is Small ribosomal subunit protein uS14A (101 aa).

Residues 31–59 (IRSPASSPEQRVAAQSELNRQPRDASAVR) form a disordered region.

It belongs to the universal ribosomal protein uS14 family. Part of the 30S ribosomal subunit. Contacts proteins S3 and S10.

In terms of biological role, binds 16S rRNA, required for the assembly of 30S particles and may also be responsible for determining the conformation of the 16S rRNA at the A site. The polypeptide is Small ribosomal subunit protein uS14A (Mycobacteroides abscessus (strain ATCC 19977 / DSM 44196 / CCUG 20993 / CIP 104536 / JCM 13569 / NCTC 13031 / TMC 1543 / L948) (Mycobacterium abscessus)).